We begin with the raw amino-acid sequence, 413 residues long: Protein trichome birefringence-like 31 (413 aa).

A helical; Signal-anchor for type II membrane protein membrane pass occupies residues 12-34 (IQSIFQVVLVSLLVLGSVRWILD). The GDS motif motif lies at 141–143 (GDS). Positions 384–398 (DCIHWCLPGVPDTWN) match the DCXHWCLPGXXDXWN motif motif.

Belongs to the PC-esterase family. TBL subfamily.

The protein localises to the membrane. Its function is as follows. May act as a bridging protein that binds pectin and other cell wall polysaccharides. Probably involved in maintaining esterification of pectins. May be involved in the specific O-acetylation of cell wall polymers. This Arabidopsis thaliana (Mouse-ear cress) protein is Protein trichome birefringence-like 31 (TBL31).